The sequence spans 243 residues: Sarcospan (243 aa).

Positions Met1 to Glu43 are disordered. The Cytoplasmic portion of the chain corresponds to Met1–Pro53. Residues Pro7–Pro24 are compositionally biased toward low complexity. Residues Leu54–Met74 traverse the membrane as a helical segment. Residues Ala75–Thr86 are Extracellular-facing. Residues Pro87–Val107 form a helical membrane-spanning segment. Topologically, residues Ser108–Lys122 are cytoplasmic. Residues Leu123–Ala143 form a helical membrane-spanning segment. Residues Ala144–Leu193 are Extracellular-facing. A helical transmembrane segment spans residues Phe194–Phe214. Residues Val215–Ile243 are Cytoplasmic-facing.

As to expression, isoform 1 is expressed exclusively in heart and skeletal muscle. Isoform 2 is expressed in heart, skeletal muscle, thymus, prostate, testis, ovary, small intestine, colon and spleen.

It is found in the cell membrane. The protein localises to the sarcolemma. It localises to the postsynaptic cell membrane. Its function is as follows. Component of the dystrophin-glycoprotein complex (DGC), a complex that spans the muscle plasma membrane and forms a link between the F-actin cytoskeleton and the extracellular matrix. Preferentially associates with the sarcoglycan subcomplex of the DGC. In Homo sapiens (Human), this protein is Sarcospan (SSPN).